A 317-amino-acid chain; its full sequence is R2-like ligand binding oxidase (317 aa).

Residues Glu-73, Glu-106, and His-109 each contribute to the Mn(2+) site. Residues 76–167 (VTQDLQPFMA…ANQVRASVTY (92 aa)) constitute a cross-link (3-(O4'-tyrosyl)-valine (Val-Tyr)). Glu-106 is a binding site for Fe cation. Residues Glu-172, Glu-207, and His-210 each coordinate Fe cation.

Belongs to the ribonucleoside diphosphate reductase small chain family. R2-like ligand binding oxidase subfamily. As to quaternary structure, homodimer. Fe cation serves as cofactor. Requires Mn(2+) as cofactor.

Functionally, probable oxidase. This is R2-like ligand binding oxidase from Saccharopolyspora erythraea (strain ATCC 11635 / DSM 40517 / JCM 4748 / NBRC 13426 / NCIMB 8594 / NRRL 2338).